The sequence spans 431 residues: O-phosphoseryl-tRNA(Sec) selenium transferase (431 aa).

The tetramerization stretch occupies residues methionine 1–glutamate 36. Arginine 67 is a pyridoxal 5'-phosphate binding site. A phosphate loop (P-loop) region spans residues glycine 88–proline 98. Arginine 89, serine 90, and glutamine 97 together coordinate substrate. Residue lysine 269 is modified to N6-(pyridoxal phosphate)lysine. Substrate is bound at residue arginine 298.

The protein belongs to the SepSecS family. As to quaternary structure, homotetramer. Pyridoxal 5'-phosphate is required as a cofactor.

It carries out the reaction O-phospho-L-seryl-tRNA(Sec) + selenophosphate + H2O = L-selenocysteinyl-tRNA(Sec) + 2 phosphate. It functions in the pathway aminoacyl-tRNA biosynthesis; selenocysteinyl-tRNA(Sec) biosynthesis; selenocysteinyl-tRNA(Sec) from L-seryl-tRNA(Sec) (archaeal/eukaryal route): step 2/2. Functionally, converts O-phosphoseryl-tRNA(Sec) to selenocysteinyl-tRNA(Sec) required for selenoprotein biosynthesis. In Methanopyrus kandleri (strain AV19 / DSM 6324 / JCM 9639 / NBRC 100938), this protein is O-phosphoseryl-tRNA(Sec) selenium transferase (spcS).